The chain runs to 609 residues: UvrABC system protein C (609 aa).

One can recognise a GIY-YIG domain in the interval 19–97 (ASPGCYLWKS…IKKHNPRFNV (79 aa)). Residues 208-243 (ESLVSDLNIKMSNASERLDFEKAARYRDMLQRIQNF) form the UVR domain.

This sequence belongs to the UvrC family. Interacts with UvrB in an incision complex.

The protein localises to the cytoplasm. In terms of biological role, the UvrABC repair system catalyzes the recognition and processing of DNA lesions. UvrC both incises the 5' and 3' sides of the lesion. The N-terminal half is responsible for the 3' incision and the C-terminal half is responsible for the 5' incision. The polypeptide is UvrABC system protein C (Leptospira interrogans serogroup Icterohaemorrhagiae serovar copenhageni (strain Fiocruz L1-130)).